A 259-amino-acid polypeptide reads, in one-letter code: HTH-type transcriptional regulator Rv1931c (259 aa).

Residues 104–121 show a composition bias toward basic residues; that stretch reads SHRRHRPRAGTGRRRPRH. The segment at 104–170 is disordered; that stretch reads SHRRHRPRAG…GAGGHRGRAG (67 aa). The HTH araC/xylS-type domain maps to 174-257; the sequence is RIGELAQRAA…GISPDQYRKA (84 aa). 2 DNA-binding regions (H-T-H motif) span residues 176–197 and 224–247; these read GELA…SDEV and VVAI…IRRV.

Its function is as follows. Controls the expression of genes important for virulence. The polypeptide is HTH-type transcriptional regulator Rv1931c (Mycobacterium tuberculosis (strain ATCC 25618 / H37Rv)).